Reading from the N-terminus, the 600-residue chain is CoA ligase FVEG_12633 (600 aa).

ATP-binding positions include 170-174, His-214, 321-323, and 342-343; these read TSGTT, AAL, and ER. The segment at 241–342 is SBD1; sequence NSVWTRLAAP…QLTGGNVLLE (102 aa). An SBD2 region spans residues 343–420; it reads RYGMTEVGMA…LRGPTVFTGY (78 aa). Met-346 lines the substrate pocket. Residues Thr-347, Asp-441, Arg-471, and Lys-564 each coordinate ATP. Position 564 (Lys-564) interacts with oxalate.

The protein belongs to the ATP-dependent AMP-binding enzyme family.

Functionally, coA ligase; part of the Fusarium detoxification of benzoxazolinone cluster 2 (FDB2) involved in the degradation of benzoxazolinones produced by the host plant. Maize, wheat, and rye produce the 2 benzoxazinone phytoanticipins 2,4-dihy-droxy-7-methoxy-1,4-benzoxazin-3-one (DIMBOA) and 2,4-dihydroxy-1,4-benzoxazin-3-one (DIBOA) that, due to their inherent instability once released, spontaneously degrade to the more stable corresponding benzoxazolinones, 6-methoxy-2-benzoxazolinone (MBOA) and 2-benzoxazolinone (BOA), respectively. The first step in the detoxification of benzoxazolinones involves the hydrolysis of the cyclic ester bond of benzoxazolinones by the FDB1 cluster gamma-lactamase MBL1 to aminophenols. MBL1 is able to convert BOA into 2-aminophenol (2-AP), as well as MBOA into 5-methoxy-2-aminophenol (2-AMP). The FDB2 cluster N-malonyltransferase FDB2/NAT1 then metabolizes aminophenols via N-malonylation to non-toxic malonamic acids. FDB2/NAT1 converts 2-AP into N-(2-hydroxyphenyl) malonamic acid (HPMA) and 2-AMP into N-(2-hydroxy-4-methoxyphenyl) malonamic acid (HMPMA). The duplicated dienlactone hydrolases DLH1 and DLH2 may provide redundant function for hydrolyzing the lactone moiety in the BOA molecule. The roles of the amidases an other enzymes encoded by the 2 FDB clusters have not been identified so far. This Gibberella moniliformis (strain M3125 / FGSC 7600) (Maize ear and stalk rot fungus) protein is CoA ligase FVEG_12633.